We begin with the raw amino-acid sequence, 359 residues long: MSSSIIGRCHFVADSIEAAGTKRRTTRWRSPRAAVIPSFHLPMRSNEVKNRTFADDIKALRLITAIKTPYLPDGRFDLEAYDTLVNLQIENGAEGVIVGGTTGEGQLMSWDEHIMLIGHTVNCFGGSIKVIGNTGSNSTREAIHATEQGFAVGMHAALHINPYYGKTSLEGLISHFESVLPMGPTIIYNVPSRTGQDIPPRVIQTMAKSPNLAGVKECVGNDRVEQYTSDGVVVWSGNDDECHVSRWDYGATGVISVTSNLVPGLMRELMFGGKNPALNSKLMPLMEWLFHEPNPIALNTALAQLGVVRPVFRLPYVPLTKAKREEFVKIVKEIGRENFIGERDVQILDDNDFILVGRY.

The transit peptide at 1 to 33 directs the protein to the chloroplast; that stretch reads MSSSIIGRCHFVADSIEAAGTKRRTTRWRSPRA. Position 102 (T102) interacts with pyruvate. The active-site Proton donor/acceptor is the Y188. The active-site Schiff-base intermediate with substrate is the K216. Residue I255 participates in pyruvate binding.

It belongs to the DapA family.

It localises to the plastid. It is found in the chloroplast. It catalyses the reaction L-aspartate 4-semialdehyde + pyruvate = (2S,4S)-4-hydroxy-2,3,4,5-tetrahydrodipicolinate + H2O + H(+). It participates in amino-acid biosynthesis; L-lysine biosynthesis via DAP pathway; (S)-tetrahydrodipicolinate from L-aspartate: step 3/4. Its function is as follows. Catalyzes the condensation of (S)-aspartate-beta-semialdehyde [(S)-ASA] and pyruvate to 4-hydroxy-tetrahydrodipicolinate (HTPA). The polypeptide is 4-hydroxy-tetrahydrodipicolinate synthase, chloroplastic (DHPS1) (Nicotiana tabacum (Common tobacco)).